Consider the following 542-residue polypeptide: Membrane protein insertase YidC (542 aa).

The helical transmembrane segment at 6–26 (NILLIGLLFVSFLLWQQWQAD) threads the bilayer. Residues 32 to 41 (VAQTQSSVAP) show a composition bias toward polar residues. The segment at 32–57 (VAQTQSSVAPSTVADAHSSDVPDADS) is disordered. Helical transmembrane passes span 326 to 346 (LVVDYGFLWWLAIPIHWLLMF), 350 to 370 (FVGNWGVAIILITLTVRGMLY), 421 to 441 (GGCLPILLQMPIFIALYWVLL), 458 to 478 (LSVQDPYYVMPILMGVSMFIM), and 501 to 521 (VIFTVFFLWFPAGLVLYWLVG).

The protein belongs to the OXA1/ALB3/YidC family. Type 1 subfamily. In terms of assembly, interacts with the Sec translocase complex via SecD. Specifically interacts with transmembrane segments of nascent integral membrane proteins during membrane integration.

It is found in the cell inner membrane. Required for the insertion and/or proper folding and/or complex formation of integral membrane proteins into the membrane. Involved in integration of membrane proteins that insert both dependently and independently of the Sec translocase complex, as well as at least some lipoproteins. Aids folding of multispanning membrane proteins. In Shewanella piezotolerans (strain WP3 / JCM 13877), this protein is Membrane protein insertase YidC.